A 337-amino-acid polypeptide reads, in one-letter code: ATP-dependent 6-phosphofructokinase (337 aa).

An ATP-binding site is contributed by Gly-11. 21–25 (RAVVR) lines the ADP pocket. ATP is bound by residues 72–73 (RY) and 102–105 (GDGS). Asp-103 serves as a coordination point for Mg(2+). 125–127 (TID) provides a ligand contact to substrate. The active-site Proton acceptor is the Asp-127. Residue Arg-154 coordinates ADP. Residues Arg-162 and 169–171 (MGR) contribute to the substrate site. ADP contacts are provided by residues 185-187 (GAD), Lys-212, and 214-216 (KNH). Substrate-binding positions include Glu-223, Arg-245, and 251-254 (HILR).

Belongs to the phosphofructokinase type A (PFKA) family. ATP-dependent PFK group I subfamily. Prokaryotic clade 'B1' sub-subfamily. As to quaternary structure, homotetramer. Mg(2+) is required as a cofactor.

The protein localises to the cytoplasm. It carries out the reaction beta-D-fructose 6-phosphate + ATP = beta-D-fructose 1,6-bisphosphate + ADP + H(+). Its pathway is carbohydrate degradation; glycolysis; D-glyceraldehyde 3-phosphate and glycerone phosphate from D-glucose: step 3/4. Allosterically activated by ADP and other diphosphonucleosides, and allosterically inhibited by phosphoenolpyruvate. In terms of biological role, catalyzes the phosphorylation of D-fructose 6-phosphate to fructose 1,6-bisphosphate by ATP, the first committing step of glycolysis. This chain is ATP-dependent 6-phosphofructokinase, found in Streptococcus pyogenes serotype M3 (strain SSI-1).